A 681-amino-acid chain; its full sequence is Peroxisomal acyl-coenzyme A oxidase 2 (681 aa).

Phosphoserine occurs at positions 3 and 9. N6-succinyllysine occurs at positions 66, 137, 303, 453, 561, and 667. The Microbody targeting signal signature appears at 679–681; it reads HKM.

This sequence belongs to the acyl-CoA oxidase family. As to quaternary structure, homodimer. FAD is required as a cofactor. As to expression, most abundant in liver. Also expressed in kidney. Not present in any other tissues tested.

It localises to the peroxisome. The catalysed reaction is (25R)-3alpha,7alpha,12alpha-trihydroxy-5beta-cholestan-26-oyl-CoA + A + H2O = (24R,25R)-3alpha,7alpha,12alpha,24-tetrahydroxy-5beta-cholestan-26-oyl-CoA + AH2. The enzyme catalyses (25S)-3alpha,7alpha,12alpha-trihydroxy-5beta-cholestan-26-oyl-CoA + O2 = (24E)-3alpha,7alpha,12alpha-trihydroxy-5beta-cholest-24-en-26-oyl-CoA + H2O2. In terms of biological role, oxidizes the CoA esters of the bile acid intermediates di- and tri-hydroxycoprostanic acids. Capable of oxidizing short as well as long chain 2-methyl branched fatty acids. This chain is Peroxisomal acyl-coenzyme A oxidase 2, found in Rattus norvegicus (Rat).